We begin with the raw amino-acid sequence, 187 residues long: uncharacterized protein (187 aa).

A signal peptide spans 1 to 25 (MSKFVKTAIAAAMVMGAFTSTATIA).

Belongs to the fimbrial protein family.

In terms of biological role, part of the yfcOPQRSUV fimbrial operon. Could contribute to adhesion to various surfaces in specific environmental niches. Increases adhesion to eukaryotic T24 bladder epithelial cells in the absence of fim genes. This is an uncharacterized protein from Escherichia coli (strain K12).